A 250-amino-acid polypeptide reads, in one-letter code: Triosephosphate isomerase (250 aa).

9–11 (NWK) serves as a coordination point for substrate. Histidine 96 acts as the Electrophile in catalysis. Glutamate 168 (proton acceptor) is an active-site residue. Residues glycine 174, serine 216, and 237 to 238 (GG) each bind substrate.

The protein belongs to the triosephosphate isomerase family. As to quaternary structure, homodimer.

The protein resides in the cytoplasm. The catalysed reaction is D-glyceraldehyde 3-phosphate = dihydroxyacetone phosphate. The protein operates within carbohydrate biosynthesis; gluconeogenesis. It functions in the pathway carbohydrate degradation; glycolysis; D-glyceraldehyde 3-phosphate from glycerone phosphate: step 1/1. In terms of biological role, involved in the gluconeogenesis. Catalyzes stereospecifically the conversion of dihydroxyacetone phosphate (DHAP) to D-glyceraldehyde-3-phosphate (G3P). This chain is Triosephosphate isomerase, found in Leptospira interrogans serogroup Icterohaemorrhagiae serovar copenhageni (strain Fiocruz L1-130).